The following is a 770-amino-acid chain: MEEKYSSQALAGGGVLGPVDVPSARLTRYIVLLCFAKFLKAVGLFESYDLLKAVHLVQFIFIVKLGSAFFMVLFQKPFSSGKVVTKHQWIKIFKHAVVGCIISLLWFFGLTLCGPLRTLLLFEHSDVVVLSLLSVLFTSSGGGPAKTRGAAFFIIAVICLLLFDNDDLMAKIAEHPEGHHDSALTHVLYTVIAFLGVADHKGGVLLLVLALCCKVGFHMASRKLSVDVGGAKRLQALSHLVSVLLLCPWVIVLSLTTESKVESWSSLIMPFITVIFFVVILDFYVESICSVKMESSKCARYGSFLIFISALLFGNFWTHPITDQLRAMNKPAHHESTEHVLSGGVVVSAVFFILSANILSSPSRKGQKGTLIGYSPEGTPLYNFMGDAIQQSSQSLPRFIKESLKQILEEYDSRQIFYFLCLNLAFTFVELFYGVWTNSLGLISDGFHMLFDCSALVMGLFAALMTRWKATRIFSYGYGRVEILSGFINGLFLMVIAFFVFMESVARLVDPPDIDTNMLTPVSVGGLIVNLVGICAFSHAHSHGASRGGCHSHEHSHSYHGHSHSHGHGHSHNDHGHSHGHSHVSSGGGMNTNMRGVFLHVLADTLGSVGVIVSTTFIQQFGWLIADPLCSLFIATLIFLSVIPLLKDACQVLLLRIPPEQEKDLHAALEKIQKIDGVISYRDPHFWCHSASVVAGTIHVQVVSDVMEQRIVQQVTAILKDAGVNNLTVQVEKEAYFQHMSGLSTGFQDVLAMTQHLESMKYYKDGTYIM.

At 1–29 (MEEKYSSQALAGGGVLGPVDVPSARLTRY) the chain is on the cytoplasmic side. Residues 30 to 50 (IVLLCFAKFLKAVGLFESYDL) traverse the membrane as a helical segment. Topologically, residues 51–53 (LKA) are lumenal. Residues 54 to 74 (VHLVQFIFIVKLGSAFFMVLF) traverse the membrane as a helical segment. Residues 75-95 (QKPFSSGKVVTKHQWIKIFKH) are Cytoplasmic-facing. The helical transmembrane segment at 96–116 (AVVGCIISLLWFFGLTLCGPL) threads the bilayer. Residue Arg117 is a topological domain, lumenal. The helical transmembrane segment at 118–138 (TLLLFEHSDVVVLSLLSVLFT) threads the bilayer. Residues 139 to 149 (SSGGGPAKTRG) are Cytoplasmic-facing. Residues 150–170 (AAFFIIAVICLLLFDNDDLMA) form a helical membrane-spanning segment. The Lumenal segment spans residues 171-190 (KIAEHPEGHHDSALTHVLYT). A helical membrane pass occupies residues 191-211 (VIAFLGVADHKGGVLLLVLAL). Over 212–235 (CCKVGFHMASRKLSVDVGGAKRLQ) the chain is Cytoplasmic. Residues 236 to 256 (ALSHLVSVLLLCPWVIVLSLT) traverse the membrane as a helical segment. The Lumenal segment spans residues 257–264 (TESKVESW). The chain crosses the membrane as a helical span at residues 265–285 (SSLIMPFITVIFFVVILDFYV). Over 286-300 (ESICSVKMESSKCAR) the chain is Cytoplasmic. The helical transmembrane segment at 301-321 (YGSFLIFISALLFGNFWTHPI) threads the bilayer. The Lumenal portion of the chain corresponds to 322-339 (TDQLRAMNKPAHHESTEH). Residues 340-360 (VLSGGVVVSAVFFILSANILS) form a helical membrane-spanning segment. Topologically, residues 361-415 (SPSRKGQKGTLIGYSPEGTPLYNFMGDAIQQSSQSLPRFIKESLKQILEEYDSRQ) are cytoplasmic. Residues 416-436 (IFYFLCLNLAFTFVELFYGVW) form a helical membrane-spanning segment. Residues 437-445 (TNSLGLISD) lie on the Lumenal side of the membrane. A helical transmembrane segment spans residues 446–466 (GFHMLFDCSALVMGLFAALMT). Residues His448 and Asp452 each contribute to the Zn(2+) site. Residues 467 to 480 (RWKATRIFSYGYGR) lie on the Cytoplasmic side of the membrane. The chain crosses the membrane as a helical span at residues 481 to 501 (VEILSGFINGLFLMVIAFFVF). The Lumenal segment spans residues 502-517 (MESVARLVDPPDIDTN). A helical membrane pass occupies residues 518 to 538 (MLTPVSVGGLIVNLVGICAFS). The segment at 539-579 (HAHSHGASRGGCHSHEHSHSYHGHSHSHGHGHSHNDHGHSH) is his-rich loop; required for zinc transport. The Cytoplasmic portion of the chain corresponds to 539-597 (HAHSHGASRGGCHSHEHSHSYHGHSHSHGHGHSHNDHGHSHGHSHVSSGGGMNTNMRGV). The tract at residues 548–586 (GGCHSHEHSHSYHGHSHSHGHGHSHNDHGHSHGHSHVSS) is disordered. Basic residues predominate over residues 558–570 (SYHGHSHSHGHGH). A helical transmembrane segment spans residues 598–618 (FLHVLADTLGSVGVIVSTTFI). 2 residues coordinate Zn(2+): His600 and Asp604. Over 619 to 622 (QQFG) the chain is Lumenal. Residues 623–643 (WLIADPLCSLFIATLIFLSVI) form a helical membrane-spanning segment. The Cytoplasmic segment spans residues 644–770 (PLLKDACQVL…KYYKDGTYIM (127 aa)).

This sequence belongs to the cation diffusion facilitator (CDF) transporter (TC 2.A.4) family. SLC30A subfamily. In terms of assembly, heterodimer with SLC30A6/ZNT6; form a functional zinc ion transmembrane transporter.

It localises to the golgi apparatus. It is found in the golgi stack membrane. The protein resides in the cytoplasmic vesicle. Its subcellular location is the COPII-coated vesicle membrane. The protein localises to the secretory vesicle membrane. It localises to the trans-Golgi network membrane. It catalyses the reaction Zn(2+)(in) + 2 H(+)(out) = Zn(2+)(out) + 2 H(+)(in). Together with SLC30A6 forms a functional proton-coupled zinc ion antiporter mediating zinc entry into the lumen of organelles along the secretory pathway. By contributing to zinc ion homeostasis within the early secretory pathway, regulates the activation and folding of enzymes like alkaline phosphatases and enzymes involved in phosphatidylinositol glycan anchor biosynthesis. The protein is Proton-coupled zinc antiporter SLC30A5 of Gallus gallus (Chicken).